A 179-amino-acid chain; its full sequence is UPF0398 protein SSU05_0416 (179 aa).

It belongs to the UPF0398 family.

The chain is UPF0398 protein SSU05_0416 from Streptococcus suis (strain 05ZYH33).